The sequence spans 69 residues: MKAKEIRDLTTSEIEEQIKSSKEELFNLRFQLATGQLEETARIRTVRKTIARLKTVAREREIEQGKANQ.

The protein belongs to the universal ribosomal protein uL29 family.

This Staphylococcus saprophyticus subsp. saprophyticus (strain ATCC 15305 / DSM 20229 / NCIMB 8711 / NCTC 7292 / S-41) protein is Large ribosomal subunit protein uL29.